The sequence spans 1194 residues: Metabotropic glutamate receptor 1 (1194 aa).

The signal sequence occupies residues 1-18 (MVGLLLFFFPAIFLEVSL). Over 19 to 592 (LPRSPGRKVL…VRYLEWSNIE (574 aa)) the chain is Extracellular. Residues Cys67 and Cys109 are joined by a disulfide bond. An L-glutamate-binding site is contributed by Tyr74. The N-linked (GlcNAc...) asparagine glycan is linked to Asn98. L-glutamate is bound by residues Ser165 and 186–188 (SAT). Asn223 carries N-linked (GlcNAc...) asparagine glycosylation. Tyr236 serves as a coordination point for L-glutamate. Residues Cys289 and Cys291 are joined by a disulfide bond. An L-glutamate-binding site is contributed by Asp318. Residues Cys378 and Cys394 are joined by a disulfide bond. N-linked (GlcNAc...) asparagine glycosylation is present at Asn397. Residue Lys409 participates in L-glutamate binding. Cys432 and Cys439 form a disulfide bridge. A glycan (N-linked (GlcNAc...) asparagine) is linked at Asn515. The chain crosses the membrane as a helical span at residues 593–615 (SIIAIAFSCLGILVTLFVTLIFV). Topologically, residues 616-629 (LYRDTPVVKSSSRE) are cytoplasmic. The helical transmembrane segment at 630–650 (LCYIILAGIFLGYVCPFTLIA) threads the bilayer. Residues 651 to 658 (KPTTTSCY) lie on the Extracellular side of the membrane. Cys657 and Cys746 are oxidised to a cystine. The helical transmembrane segment at 659–680 (LQRLLVGLSSAMCYSALVTKTN) threads the bilayer. At 681–703 (RIARILAGSKKKICTRKPRFMSA) the chain is on the cytoplasmic side. Residues 704–727 (WAQVIIASILISVQLTLVVTLIIM) traverse the membrane as a helical segment. The Extracellular portion of the chain corresponds to 728-750 (EPPMPILSYPSIKEVYLICNTSN). A helical membrane pass occupies residues 751-772 (LGVVAPLGYNGLLIMSCTYYAF). Topologically, residues 773 to 785 (KTRNVPANFNEAK) are cytoplasmic. A helical transmembrane segment spans residues 786-807 (YIAFTMYTTCIIWLAFVPIYFG). Residues 808-815 (SNYKIITT) are Extracellular-facing. The chain crosses the membrane as a helical span at residues 816 to 840 (CFAVSLSVTVALGCMFTPKMYIIIA). Topologically, residues 841–1194 (KPERNVRSAF…RDYKQSSSTL (354 aa)) are cytoplasmic. A Phosphoserine modification is found at Ser853. The residue at position 871 (Thr871) is a Phosphothreonine. The segment at 883–905 (AGNANSNGKSVSWSEPGGGQVPK) is disordered. The segment covering 885 to 895 (NANSNGKSVSW) has biased composition (polar residues). Phosphoserine is present on residues Ser894 and Ser969. The tract at residues 1007 to 1030 (PALPKGLPPPLQQQQQPPPQQKSL) is disordered. A compositionally biased stretch (pro residues) spans 1012–1026 (GLPPPLQQQQQPPPQ). Ser1091 is subject to Phosphoserine. The tract at residues 1113 to 1173 (HEREGNTEED…SPVSESVLCT (61 aa)) is disordered. Acidic residues predominate over residues 1119-1131 (TEEDELEEEEEDL). Position 1142 is a phosphoserine (Ser1142). Position 1146 is a phosphothreonine (Thr1146). Ser1149 carries the post-translational modification Phosphoserine. Positions 1154 to 1170 (SVASGSSVPSSPVSESV) are enriched in low complexity.

It belongs to the G-protein coupled receptor 3 family. As to quaternary structure, homodimer; disulfide-linked. The PPXXF motif binds HOMER1, HOMER2 and HOMER3. Interacts with TAMALIN. Interacts with RYR1, RYR2, ITPR1, SHANK1 and SHANK3. Interacts with SIAH1. As to expression, detected in brain.

The protein resides in the cell membrane. It is found in the postsynaptic cell membrane. It localises to the cell projection. The protein localises to the dendrite. With respect to regulation, signaling is inhibited by the antagonist LY341495. The LY341495 binding site partially overlaps with the glutamate binding site. Signaling is also inhibited by synthetic allosteric regulators, such as FITM (4-fluoro-N-(4-(6-(isopropylamino)pyrimidin-4-yl)thiazol-2-yl)-N-methylbenzamide) that bind in a pocket between the transmembrane helices. Functionally, G-protein coupled receptor for glutamate. Ligand binding causes a conformation change that triggers signaling via guanine nucleotide-binding proteins (G proteins) and modulates the activity of down-stream effectors. Signaling activates a phosphatidylinositol-calcium second messenger system. May participate in the central action of glutamate in the CNS, such as long-term potentiation in the hippocampus and long-term depression in the cerebellum. May function in the light response in the retina. Induces GRID1 and GRID2 cation-channel activation via GNAQ-PLC-PKC pathway in dopaminergic neurons and cerebellar Purkinje cell, respectively. This chain is Metabotropic glutamate receptor 1 (GRM1), found in Homo sapiens (Human).